The sequence spans 282 residues: Probable methylxanthine N7-demethylase NdmC (282 aa).

It carries out the reaction 7-methylxanthine + NADPH + O2 + H(+) = xanthine + formaldehyde + NADP(+) + H2O. It catalyses the reaction 7-methylxanthine + NADH + O2 + H(+) = xanthine + formaldehyde + NAD(+) + H2O. Its function is as follows. Involved in the caffeine degradation, which is the essential first step for assimilating the carbon and nitrogen in caffeine. Probably catalyzes the N7-demethylation of 7-methylxanthine to produce xanthine and formaldehyde. In Pseudomonas sp. (strain TJI-51), this protein is Probable methylxanthine N7-demethylase NdmC.